Reading from the N-terminus, the 132-residue chain is Translation initiation factor 5A (132 aa).

Lys36 is subject to Hypusine.

It belongs to the eIF-5A family.

It is found in the cytoplasm. Its function is as follows. Functions by promoting the formation of the first peptide bond. In Methanosphaera stadtmanae (strain ATCC 43021 / DSM 3091 / JCM 11832 / MCB-3), this protein is Translation initiation factor 5A.